Reading from the N-terminus, the 349-residue chain is Acyl-CoA Delta(11) desaturase (349 aa).

2 consecutive transmembrane segments (helical) span residues 41 to 61 (FLTFSYAHLAALYGLYLCFTS) and 66 to 86 (TLLFSFVLFHMSNIGITAGAH). The Histidine box-1 signature appears at 86–91 (HRLWTH). A Histidine box-2 motif is present at residues 123–127 (HRLHH). The helical transmembrane segment at 184-204 (AVPLIGTVCFALPTLIPVYCW) threads the bilayer. Positions 263 to 267 (HNYHH) match the Histidine box-3 motif. The helical transmembrane segment at 282–302 (FLNLTTLFIDFCAWFGWAYDL) threads the bilayer.

This sequence belongs to the fatty acid desaturase type 1 family. Fe cation serves as cofactor. Adult female pheromone gland. Increases by two or three orders of magnitude during the first 2 days after adult eclosion.

The protein localises to the endoplasmic reticulum membrane. The enzyme catalyses an 11,12-saturated fatty acyl-CoA + 2 Fe(II)-[cytochrome b5] + O2 + 2 H(+) = an (11Z)-Delta(11)-fatty acyl-CoA + 2 Fe(III)-[cytochrome b5] + 2 H2O. In terms of biological role, catalyzes the formation of Delta(11) fatty acyl precursors in the pheromone gland. The chain is Acyl-CoA Delta(11) desaturase (D11DS) from Trichoplusia ni (Cabbage looper).